Here is a 71-residue protein sequence, read N- to C-terminus: Conotoxin ba5b (71 aa).

The first 19 residues, 1-19, serve as a signal peptide directing secretion; that stretch reads MLCLPVFITLLLLVSPSAA. Positions 20-52 are excised as a propeptide; the sequence is LPVESELQRDLTQDSPKDFRIREPLLLSKMFDR. Cystine bridges form between Cys54–Cys63 and Cys55–Cys64. Cysteine amide is present on Cys64. The propeptide occupies 66–71; sequence RYQRGS.

Belongs to the conotoxin T superfamily. Expressed by the venom duct.

It is found in the secreted. This is Conotoxin ba5b from Conus bayani (Bayan's cone).